Here is a 516-residue protein sequence, read N- to C-terminus: Cytochrome P450 1A1 (516 aa).

A mitochondrial targeting signal region spans residues 33 to 44 (WQPRVPKGLKSP). Residue Ser-71 is glycosylated (O-linked (GlcNAc) serine). Substrate is bound at residue Phe-228. Cys-461 contacts heme.

This sequence belongs to the cytochrome P450 family. As to quaternary structure, interacts with cytosolic chaperones HSP70 and HSP90; this interaction is required for initial targeting to mitochondria. Interacts (via mitochondrial targeting signal) with TOMM40 (via N-terminus); this interaction is required for translocation across the mitochondrial outer membrane. It depends on heme as a cofactor.

It is found in the endoplasmic reticulum membrane. The protein localises to the mitochondrion inner membrane. The protein resides in the microsome membrane. Its subcellular location is the cytoplasm. The catalysed reaction is an organic molecule + reduced [NADPH--hemoprotein reductase] + O2 = an alcohol + oxidized [NADPH--hemoprotein reductase] + H2O + H(+). The enzyme catalyses estrone + reduced [NADPH--hemoprotein reductase] + O2 = 2-hydroxyestrone + oxidized [NADPH--hemoprotein reductase] + H2O + H(+). It carries out the reaction estrone + reduced [NADPH--hemoprotein reductase] + O2 = 4-hydroxyestrone + oxidized [NADPH--hemoprotein reductase] + H2O + H(+). It catalyses the reaction estrone + reduced [NADPH--hemoprotein reductase] + O2 = 6alpha-hydroxyestrone + oxidized [NADPH--hemoprotein reductase] + H2O + H(+). The catalysed reaction is estrone + reduced [NADPH--hemoprotein reductase] + O2 = 15alpha-hydroxyestrone + oxidized [NADPH--hemoprotein reductase] + H2O + H(+). The enzyme catalyses estrone + reduced [NADPH--hemoprotein reductase] + O2 = 16alpha-hydroxyestrone + oxidized [NADPH--hemoprotein reductase] + H2O + H(+). It carries out the reaction 17beta-estradiol + reduced [NADPH--hemoprotein reductase] + O2 = 2-hydroxy-17beta-estradiol + oxidized [NADPH--hemoprotein reductase] + H2O + H(+). It catalyses the reaction 17beta-estradiol + reduced [NADPH--hemoprotein reductase] + O2 = 4-hydroxy-17beta-estradiol + oxidized [NADPH--hemoprotein reductase] + H2O + H(+). The catalysed reaction is 17beta-estradiol + reduced [NADPH--hemoprotein reductase] + O2 = 6alpha-hydroxy-17beta-estradiol + oxidized [NADPH--hemoprotein reductase] + H2O + H(+). The enzyme catalyses 17beta-estradiol + reduced [NADPH--hemoprotein reductase] + O2 = 7alpha-hydroxy-17beta-estradiol + oxidized [NADPH--hemoprotein reductase] + H2O + H(+). It carries out the reaction 17beta-estradiol + reduced [NADPH--hemoprotein reductase] + O2 = 15alpha-hydroxy-17beta-estradiol + oxidized [NADPH--hemoprotein reductase] + H2O + H(+). It catalyses the reaction (5Z,8Z,11Z)-eicosatrienoate + reduced [NADPH--hemoprotein reductase] + O2 = 19-hydroxy-(5Z,8Z,11Z)-eicosatrienoate + oxidized [NADPH--hemoprotein reductase] + H2O + H(+). The catalysed reaction is (5Z,8Z,11Z,14Z)-eicosatetraenoate + reduced [NADPH--hemoprotein reductase] + O2 = 16-hydroxy-(5Z,8Z,11Z,14Z)-eicosatetraenoate + oxidized [NADPH--hemoprotein reductase] + H2O + H(+). The enzyme catalyses (5Z,8Z,11Z,14Z)-eicosatetraenoate + reduced [NADPH--hemoprotein reductase] + O2 = 17-hydroxy-(5Z,8Z,11Z,14Z)-eicosatetraenoate + oxidized [NADPH--hemoprotein reductase] + H2O + H(+). It carries out the reaction (5Z,8Z,11Z,14Z)-eicosatetraenoate + reduced [NADPH--hemoprotein reductase] + O2 = 18-hydroxy-(5Z,8Z,11Z,14Z)-eicosatetraenoate + oxidized [NADPH--hemoprotein reductase] + H2O + H(+). It catalyses the reaction (5Z,8Z,11Z,14Z)-eicosatetraenoate + reduced [NADPH--hemoprotein reductase] + O2 = 19-hydroxy-(5Z,8Z,11Z,14Z)-eicosatetraenoate + oxidized [NADPH--hemoprotein reductase] + H2O + H(+). The catalysed reaction is (5Z,8Z,11Z,14Z,17Z)-eicosapentaenoate + reduced [NADPH--hemoprotein reductase] + O2 = 19-hydroxy-(5Z,8Z,11Z,14Z,17Z)-eicosapentaenoate + oxidized [NADPH--hemoprotein reductase] + H2O + H(+). The enzyme catalyses (5Z,8Z,11Z,14Z)-eicosatetraenoate + reduced [NADPH--hemoprotein reductase] + O2 = (8R,9S)-epoxy-(5Z,11Z,14Z)-eicosatrienoate + oxidized [NADPH--hemoprotein reductase] + H2O + H(+). It carries out the reaction (5Z,8Z,11Z,14Z)-eicosatetraenoate + reduced [NADPH--hemoprotein reductase] + O2 = (11R,12S)-epoxy-(5Z,8Z,14Z)-eicosatrienoate + oxidized [NADPH--hemoprotein reductase] + H2O + H(+). It catalyses the reaction (5Z,8Z,11Z,14Z)-eicosatetraenoate + reduced [NADPH--hemoprotein reductase] + O2 = (14S,15R)-epoxy-(5Z,8Z,11Z)-eicosatrienoate + oxidized [NADPH--hemoprotein reductase] + H2O + H(+). The catalysed reaction is (5Z,8Z,11Z,14Z)-eicosatetraenoate + reduced [NADPH--hemoprotein reductase] + O2 = (14R,15S)-epoxy-(5Z,8Z,11Z)-eicosatrienoate + oxidized [NADPH--hemoprotein reductase] + H2O + H(+). The enzyme catalyses (5Z,8Z,11Z,14Z,17Z)-eicosapentaenoate + reduced [NADPH--hemoprotein reductase] + O2 = (17R,18S)-epoxy-(5Z,8Z,11Z,14Z)-eicosatetraenoate + oxidized [NADPH--hemoprotein reductase] + H2O + H(+). It carries out the reaction (4Z,7Z,10Z,13Z,16Z,19Z)-docosahexaenoate + reduced [NADPH--hemoprotein reductase] + O2 = (19S,20R)-epoxy-(4Z,7Z,10Z,13Z,16Z)-docosapentaenoate + oxidized [NADPH--hemoprotein reductase] + H2O + H(+). It catalyses the reaction (4Z,7Z,10Z,13Z,16Z,19Z)-docosahexaenoate + reduced [NADPH--hemoprotein reductase] + O2 = (19R,20S)-epoxy-(4Z,7Z,10Z,13Z,16Z)-docosapentaenoate + oxidized [NADPH--hemoprotein reductase] + H2O + H(+). The catalysed reaction is all-trans-retinol + reduced [NADPH--hemoprotein reductase] + O2 = all-trans-retinal + oxidized [NADPH--hemoprotein reductase] + 2 H2O + H(+). The enzyme catalyses all-trans-retinal + reduced [NADPH--hemoprotein reductase] + O2 = all-trans-retinoate + oxidized [NADPH--hemoprotein reductase] + H2O + 2 H(+). It carries out the reaction (13S)-hydroperoxy-(9Z,11E)-octadecadienoate = 13-oxo-(9Z,11E)-octadecadienoate + H2O. It catalyses the reaction (12S)-hydroperoxy-(5Z,8Z,10E,14Z)-eicosatetraenoate = 12-oxo-(5Z,8Z,10E,14Z)-eicosatetraenoate + H2O. The catalysed reaction is (15S)-hydroperoxy-(5Z,8Z,11Z,13E)-eicosatetraenoate = 15-oxo-(5Z,8Z,11Z,13E)-eicosatetraenoate + H2O. The enzyme catalyses (5S)-hydroperoxy-(6E,8Z,11Z,14Z)-eicosatetraenoate = 5-oxo-(6E,8Z,11Z,14Z)-eicosatetraenoate + H2O. It functions in the pathway steroid hormone biosynthesis. Its pathway is lipid metabolism; fatty acid metabolism. It participates in cofactor metabolism; retinol metabolism. A cytochrome P450 monooxygenase involved in the metabolism of various endogenous substrates, including fatty acids, steroid hormones and vitamins. Mechanistically, uses molecular oxygen inserting one oxygen atom into a substrate, and reducing the second into a water molecule, with two electrons provided by NADPH via cytochrome P450 reductase (CPR; NADPH-ferrihemoprotein reductase). Catalyzes the hydroxylation of carbon-hydrogen bonds. Exhibits high catalytic activity for the formation of hydroxyestrogens from estrone (E1) and 17beta-estradiol (E2), namely 2-hydroxy E1 and E2, as well as D-ring hydroxylated E1 and E2 at the C15alpha and C16alpha positions. Displays different regioselectivities for polyunsaturated fatty acids (PUFA) hydroxylation. Catalyzes the epoxidation of double bonds of certain PUFA. Converts arachidonic acid toward epoxyeicosatrienoic acid (EET) regioisomers, 8,9-, 11,12-, and 14,15-EET, that function as lipid mediators in the vascular system. Displays an absolute stereoselectivity in the epoxidation of eicosapentaenoic acid (EPA) producing the 17(R),18(S) enantiomer. May play an important role in all-trans retinoic acid biosynthesis in extrahepatic tissues. Catalyzes two successive oxidative transformation of all-trans retinol to all-trans retinal and then to the active form all-trans retinoic acid. May also participate in eicosanoids metabolism by converting hydroperoxide species into oxo metabolites (lipoxygenase-like reaction, NADPH-independent). The protein is Cytochrome P450 1A1 (CYP1A1) of Balaenoptera acutorostrata (Common minke whale).